The primary structure comprises 228 residues: Probable septum site-determining protein MinC (228 aa).

It belongs to the MinC family. As to quaternary structure, interacts with MinD and FtsZ.

In terms of biological role, cell division inhibitor that blocks the formation of polar Z ring septums. Rapidly oscillates between the poles of the cell to destabilize FtsZ filaments that have formed before they mature into polar Z rings. Prevents FtsZ polymerization. The protein is Probable septum site-determining protein MinC of Yersinia pseudotuberculosis serotype O:1b (strain IP 31758).